The chain runs to 192 residues: MPEGEMMHKLQDIIDRKLLDSRRIFFSEPVTEKSAAEAIKKLWYLELTSPGQPIVFVINSPGGSVDAGFAVWDQIKMISSPVTTVVTGLAASMGSVLSLCAAPGRRFATPHARIMIHQPSIGGTITGQATDLDIHAREILKTKARIIDVYVEATGQSREVIEKAIDRDMWMSANEAMEFGLLDGILFSFNDL.

Ser-92 functions as the Nucleophile in the catalytic mechanism. His-117 is an active-site residue.

Belongs to the peptidase S14 family. In terms of assembly, fourteen ClpP subunits assemble into 2 heptameric rings which stack back to back to give a disk-like structure with a central cavity, resembling the structure of eukaryotic proteasomes.

Its subcellular location is the cytoplasm. It carries out the reaction Hydrolysis of proteins to small peptides in the presence of ATP and magnesium. alpha-casein is the usual test substrate. In the absence of ATP, only oligopeptides shorter than five residues are hydrolyzed (such as succinyl-Leu-Tyr-|-NHMec, and Leu-Tyr-Leu-|-Tyr-Trp, in which cleavage of the -Tyr-|-Leu- and -Tyr-|-Trp bonds also occurs).. In terms of biological role, cleaves peptides in various proteins in a process that requires ATP hydrolysis. Has a chymotrypsin-like activity. Plays a major role in the degradation of misfolded proteins. The protein is ATP-dependent Clp protease proteolytic subunit 1 of Chlamydia muridarum (strain MoPn / Nigg).